The sequence spans 124 residues: Putative iron-sulfur cluster insertion protein ErpA (124 aa).

Iron-sulfur cluster-binding residues include cysteine 52, cysteine 116, and cysteine 118.

The protein belongs to the HesB/IscA family. Homodimer. Iron-sulfur cluster is required as a cofactor.

Required for insertion of 4Fe-4S clusters. The protein is Putative iron-sulfur cluster insertion protein ErpA of Delftia acidovorans (strain DSM 14801 / SPH-1).